Consider the following 95-residue polypeptide: Aspartyl/glutamyl-tRNA(Asn/Gln) amidotransferase subunit C (95 aa).

This sequence belongs to the GatC family. As to quaternary structure, heterotrimer of A, B and C subunits.

The enzyme catalyses L-glutamyl-tRNA(Gln) + L-glutamine + ATP + H2O = L-glutaminyl-tRNA(Gln) + L-glutamate + ADP + phosphate + H(+). The catalysed reaction is L-aspartyl-tRNA(Asn) + L-glutamine + ATP + H2O = L-asparaginyl-tRNA(Asn) + L-glutamate + ADP + phosphate + 2 H(+). Allows the formation of correctly charged Asn-tRNA(Asn) or Gln-tRNA(Gln) through the transamidation of misacylated Asp-tRNA(Asn) or Glu-tRNA(Gln) in organisms which lack either or both of asparaginyl-tRNA or glutaminyl-tRNA synthetases. The reaction takes place in the presence of glutamine and ATP through an activated phospho-Asp-tRNA(Asn) or phospho-Glu-tRNA(Gln). The chain is Aspartyl/glutamyl-tRNA(Asn/Gln) amidotransferase subunit C from Bartonella henselae (strain ATCC 49882 / DSM 28221 / CCUG 30454 / Houston 1) (Rochalimaea henselae).